The following is a 68-amino-acid chain: Small ribosomal subunit protein bS21 (68 aa).

Belongs to the bacterial ribosomal protein bS21 family.

In Jannaschia sp. (strain CCS1), this protein is Small ribosomal subunit protein bS21.